The following is a 371-amino-acid chain: 4-hydroxy-3-methylbut-2-en-1-yl diphosphate synthase (flavodoxin) (371 aa).

Residues Cys270, Cys273, Cys305, and Glu312 each coordinate [4Fe-4S] cluster.

Belongs to the IspG family. Requires [4Fe-4S] cluster as cofactor.

The enzyme catalyses (2E)-4-hydroxy-3-methylbut-2-enyl diphosphate + oxidized [flavodoxin] + H2O + 2 H(+) = 2-C-methyl-D-erythritol 2,4-cyclic diphosphate + reduced [flavodoxin]. It participates in isoprenoid biosynthesis; isopentenyl diphosphate biosynthesis via DXP pathway; isopentenyl diphosphate from 1-deoxy-D-xylulose 5-phosphate: step 5/6. Converts 2C-methyl-D-erythritol 2,4-cyclodiphosphate (ME-2,4cPP) into 1-hydroxy-2-methyl-2-(E)-butenyl 4-diphosphate. This Chromohalobacter salexigens (strain ATCC BAA-138 / DSM 3043 / CIP 106854 / NCIMB 13768 / 1H11) protein is 4-hydroxy-3-methylbut-2-en-1-yl diphosphate synthase (flavodoxin).